Here is a 279-residue protein sequence, read N- to C-terminus: MQKYLEKANVLIEALPYIRKFNSKIILIKYGGSAMENEELKHCVMQDIALLKLVGLKPIIVHGGGKDISAMCEKLGVKSEFKNGLRVSDKATIEVASMVLNHINKNLVHSLQNLGVKAIGLCGKDGALLECVKKDENLAFVGTIQKVNSKILEELLEKDFLPIIAPIGMDENFNTYNINADDAACAIAKALRAEKLAFLTDTAGLYEDFNDKNSLISKISLEQAKILAPKIEGGMHVKLKSCIDACENGVKKVHILDGRVKHSLLLEFFTDEGIGTLVG.

Substrate contacts are provided by residues 64–65 (GG), arginine 86, and asparagine 177.

This sequence belongs to the acetylglutamate kinase family. ArgB subfamily.

Its subcellular location is the cytoplasm. It carries out the reaction N-acetyl-L-glutamate + ATP = N-acetyl-L-glutamyl 5-phosphate + ADP. It participates in amino-acid biosynthesis; L-arginine biosynthesis; N(2)-acetyl-L-ornithine from L-glutamate: step 2/4. Functionally, catalyzes the ATP-dependent phosphorylation of N-acetyl-L-glutamate. The sequence is that of Acetylglutamate kinase from Campylobacter jejuni subsp. jejuni serotype O:2 (strain ATCC 700819 / NCTC 11168).